A 251-amino-acid polypeptide reads, in one-letter code: tRNA pseudouridine synthase A (251 aa).

The active-site Nucleophile is D52. Y113 lines the substrate pocket.

The protein belongs to the tRNA pseudouridine synthase TruA family. In terms of assembly, homodimer.

The enzyme catalyses uridine(38/39/40) in tRNA = pseudouridine(38/39/40) in tRNA. Its function is as follows. Formation of pseudouridine at positions 38, 39 and 40 in the anticodon stem and loop of transfer RNAs. This is tRNA pseudouridine synthase A from Brucella abortus (strain 2308).